The sequence spans 206 residues: MILCDIGNSTAKFYNNGISKVMSIKEFQKFEPKDTVYFINVNPNFKRKLKGTLFFDLAPYFEINTLYSKELGVDRIAASCAINDGIVIDAGSAITVDMVNKNIHMGGFILPGITKYVEAYKSISSVLDVGLNSQVNLDKIPLNTRDAITYGVVNSVVLLVENIAKNRKIYITGGDGQFLSQFFKNAVYDKNLVFRSMLNVIKSKGL.

Position 5 to 12 (5 to 12 (DIGNSTAK)) interacts with ATP. Substrate contacts are provided by residues Tyr-67 and 72–75 (GVDR). The active-site Proton acceptor is Asp-74. Asp-89 lines the K(+) pocket. Ser-92 contacts ATP. Thr-144 is a binding site for substrate.

It belongs to the type III pantothenate kinase family. Homodimer. Requires NH4(+) as cofactor. It depends on K(+) as a cofactor.

It localises to the cytoplasm. The catalysed reaction is (R)-pantothenate + ATP = (R)-4'-phosphopantothenate + ADP + H(+). It functions in the pathway cofactor biosynthesis; coenzyme A biosynthesis; CoA from (R)-pantothenate: step 1/5. In terms of biological role, catalyzes the phosphorylation of pantothenate (Pan), the first step in CoA biosynthesis. The protein is Type III pantothenate kinase of Campylobacter hominis (strain ATCC BAA-381 / DSM 21671 / CCUG 45161 / LMG 19568 / NCTC 13146 / CH001A).